The following is a 309-amino-acid chain: Probable ABC transporter permease protein YqgH (309 aa).

6 consecutive transmembrane segments (helical) span residues 30-50, 88-108, 133-153, 165-185, 214-234, and 280-300; these read MIVT…TIFL, FIFG…PLGI, LVGI…VPFI, LLAG…SISA, LVPA…ARAF, and NTLW…ILLI. Residues 89 to 300 form the ABC transmembrane type-1 domain; sequence IFGSFAVTIL…VMSFLFILLI (212 aa).

The protein belongs to the binding-protein-dependent transport system permease family. CysTW subfamily.

It is found in the cell membrane. Functionally, part of the binding-protein-dependent transport system YqgGHIJK. Probably responsible for the translocation of the substrate across the membrane. The sequence is that of Probable ABC transporter permease protein YqgH (yqgH) from Bacillus subtilis (strain 168).